A 1894-amino-acid chain; its full sequence is 1,3-beta-glucan synthase component bgs2 (1894 aa).

Disordered stretches follow at residues 1 to 53 and 282 to 310; these read MSWH…DSNK and GPKI…PETS. Over residues 32 to 51 the composition is skewed to polar residues; it reads EFNNPGEESTYPQANSWNDS. Residues 286 to 296 are compositionally biased toward basic residues; it reads KQAKKKQKRKS. 16 consecutive transmembrane segments (helical) span residues 530 to 550, 566 to 586, 600 to 620, 655 to 675, 710 to 730, 731 to 751, 1338 to 1358, 1394 to 1414, 1476 to 1498, 1503 to 1525, 1598 to 1618, 1637 to 1657, 1673 to 1693, 1697 to 1717, 1778 to 1798, and 1837 to 1857; these read VSLG…FEWI, FLIL…VFGF, VAIV…LVPL, VSWG…YFFL, ILLG…TYLW, YILV…ISIW, IFIM…GGMY, CIIS…VQEL, LLFS…MLLF, VWIP…PFIF, FTEI…YFFI, ILIL…TFAG, FGAV…IIVF, WYLE…IIAI, DFFL…IPFI, and TMFF…LVVA.

It belongs to the glycosyltransferase 48 family. As to quaternary structure, component of the 1,3-beta-glucan synthase (GS) complex, composed of at least the alternate catalytic subunits bgs1, bgs2, bgs3, and bgs4, and a regulatory subunit chr4.

It is found in the prospore membrane. The enzyme catalyses [(1-&gt;3)-beta-D-glucosyl](n) + UDP-alpha-D-glucose = [(1-&gt;3)-beta-D-glucosyl](n+1) + UDP + H(+). Functionally, alternate catalytic subunit of the 1,3-beta-glucan synthase (GS) complex. Synthesizes 1,3-beta-glucan, a major structural component of the yeast cell wall. Has a role in ascospore development where it is required for the assembly of a functional spore wall. This is 1,3-beta-glucan synthase component bgs2 from Schizosaccharomyces pombe (strain 972 / ATCC 24843) (Fission yeast).